The chain runs to 614 residues: Adenylate kinase 7 (614 aa).

An adenylate kinase region spans residues 258 to 503 (PIKICILGPP…KEIGKPRNYG (246 aa)). Residue 268-273 (AVGKSS) participates in ATP binding. Positions 288–346 (KMKDVIAEAIAKLEAIVAPKDSVEGEEEGEEEEEEENVDDAQELLDGIKESMEQNAGRL) are NMP. The segment at 308 to 327 (DSVEGEEEGEEEEEEENVDD) is disordered. Positions 311–327 (EGEEEGEEEEEEENVDD) are enriched in acidic residues. Residues 323–346 (ENVDDAQELLDGIKESMEQNAGRL), 373–376 (GFPK), and Gln-380 contribute to the AMP site. A coiled-coil region spans residues 376–568 (KTYDQAKDLF…EERELLEVQS (193 aa)). An LID region spans residues 428–438 (NLPESVVAGTH). Arg-446 is a binding site for AMP. Gly-478 is a binding site for ATP. The segment at 570–614 (PLRNYLMTYVMPTLMQGLNECCKVRPEDPVDFLAEYLFKNNPEMQ) is DPY-30.

It in the central section; belongs to the adenylate kinase family. This sequence in the C-terminal section; belongs to the dpy-30 family.

It localises to the cytoplasm. Its subcellular location is the cytosol. The protein resides in the cell projection. It is found in the cilium. The protein localises to the flagellum. It catalyses the reaction AMP + ATP = 2 ADP. The enzyme catalyses a 2'-deoxyribonucleoside 5'-diphosphate + ATP = a 2'-deoxyribonucleoside 5'-triphosphate + ADP. The catalysed reaction is a ribonucleoside 5'-diphosphate + ATP = a ribonucleoside 5'-triphosphate + ADP. Its function is as follows. Nucleoside monophosphate (NMP) kinase that catalyzes the reversible transfer of the terminal phosphate group between nucleoside triphosphates and monophosphates. Has highest activity toward AMP, and weaker activity toward dAMP, CMP and dCMP. Also displays broad nucleoside diphosphate kinase activity. Involved in maintaining ciliary structure and function. The chain is Adenylate kinase 7 (Ak7) from Mus musculus (Mouse).